Reading from the N-terminus, the 781-residue chain is Catenin beta-1 (781 aa).

Ala2 is modified (N-acetylalanine). The segment at Ala2–Ser23 is interaction with VCL. Ser23 carries the post-translational modification Phosphoserine; by GSK3-beta; alternate. O-linked (GlcNAc) serine; alternate glycosylation is present at Ser23. Ser29 is modified (phosphoserine; by GSK3-beta). Residues Ser33 and Ser37 each carry the phosphoserine; by GSK3-beta and HIPK2 modification. The tract at residues Gly34 to Val57 is disordered. Residue Thr41 is modified to Phosphothreonine; by GSK3-beta. Phosphoserine is present on Ser45. Lys49 carries the N6-acetyllysine modification. The residue at position 64 (Tyr64) is a Phosphotyrosine; by PTK6. Tyr142 bears the Phosphotyrosine; by FYN and PTK6 mark. ARM repeat units lie at residues Arg151–Ser191, Gln193–Ser234, Gly235–Ala276, Gly277–Ser318, Gly319–Ala360, Gly361–Ser389, Gly400–Val441, Gly442–Ala484, Tyr489–Gln530, Gly531–Glu571, Asn594–Ala636, and Thr637–Lys666. The interaction with BCL9 stretch occupies residues Leu156–Leu178. Ser191 is subject to Phosphoserine; by CDK5. A Phosphoserine; by CDK5 modification is found at Ser246. Tyr331 carries the phosphotyrosine; by PTK6 modification. Residue Tyr333 is modified to Phosphotyrosine; by SRC and PTK6. Ser552 carries the phosphoserine modification. Thr556 carries the (Microbial infection) Phosphothreonine modification. Thr556 is subject to Phosphothreonine. Cys619 is modified (S-nitrosocysteine). Residue Ser675 is modified to Phosphoserine. Positions Glu705–Leu781 are disordered. Residues Met734–Gly745 are compositionally biased toward basic and acidic residues. An interaction with SCRIB region spans residues Asn772–Leu781.

This sequence belongs to the beta-catenin family. As to quaternary structure, two separate complex-associated pools are found in the cytoplasm. The majority is present as component of an E-cadherin:catenin adhesion complex composed of at least E-cadherin/CDH1 and beta-catenin/CTNNB1, and possibly alpha-catenin/CTNNA1; the complex is located to adherens junctions. The stable association of CTNNA1 is controversial as CTNNA1 was shown not to bind to F-actin when assembled in the complex. Alternatively, the CTNNA1-containing complex may be linked to F-actin by other proteins such as LIMA1. Another cytoplasmic pool is part of a large complex containing AXIN1, AXIN2, APC, CSNK1A1 and GSK3B that promotes phosphorylation on N-terminal Ser and Thr residues and ubiquitination of CTNNB1 via BTRC and its subsequent degradation by the proteasome. Wnt-dependent activation of DVL antagonizes the action of GSK3B. When GSK3B activity is inhibited the complex dissociates, CTNNB1 is dephosphorylated and is no longer targeted for destruction. The stabilized protein translocates to the nucleus, where it binds TCF/LEF-1 family members, BCL9, BCL9L and possibly also RUVBL1 and CHD8. Binds CTNNBIP and EP300. CTNNB1 forms a ternary complex with LEF1 and EP300 that is disrupted by CTNNBIP1 binding. Interacts with TAX1BP3 (via the PDZ domain); this interaction inhibits the transcriptional activity of CTNNB1. Interacts with AJAP1, BAIAP1, CARM1, CTNNA3, CXADR and PCDH11Y. Binds NHERF1. Interacts with GLIS2 and MUC1. Interacts with SLC30A9. Interacts with XIRP1. Interacts directly with AXIN1; the interaction is regulated by CDK2 phosphorylation of AXIN1. Interacts with SCRIB. Interacts with RAPGEF2. Interacts with PTPRU (via the cytoplasmic juxtamembrane domain). Interacts with EMD. Interacts with TNIK and TCF7L2. Interacts with SESTD1 and TRPC4. Interacts with CAV1. Interacts with TRPV4. The TRPV4 and CTNNB1 complex can interact with CDH1. Interacts with VCL. Interacts with PTPRJ. Interacts with PKT7 and CDK2. Interacts with FAT1 (via the cytoplasmic domain). Interacts with NANOS1 and NDRG2. Interacts with isoform 1 of NEK2. Interacts with both isoform 1 and isoform 2 of CDK5. Interacts with PTK6. Interacts with SOX7; this interaction may lead to proteasomal degradation of active CTNNB1 and thus inhibition of Wnt/beta-catenin-stimulated transcription. Identified in a complex with HINT1 and MITF. Interacts with FHIT. The CTNNB1 and TCF7L2/TCF4 complex interacts with PML (isoform PML-4). Interacts with FERMT2. Identified in a complex with TCF7L2/TCF4 and FERMT2. Interacts with RORA. May interact with P-cadherin/CDH3. Interacts with RNF220. Interacts with CTNND2. Interacts (via the C-terminal region) with CBY1. The complex composed, at least, of APC, CTNNB1 and GSK3B interacts with JPT1; the interaction requires the inactive form of GSK3B (phosphorylated at 'Ser-9'). Interacts with DLG5. Interacts with FAM53B; promoting translocation to the nucleus. Interacts with TMEM170B. Interacts with AHI1. Interacts with GID8. Component of an cadherin:catenin adhesion complex composed of at least of CDH26, beta-catenin/CTNNB1, alpha-catenin/CTNNA1 and p120 catenin/CTNND1. Forms a complex comprising APPL1, RUVBL2, APPL2, HDAC1 and HDAC2. Interacts with IRF2BPL; mediates the ubiquitination and degradation of CTNNB1. Interacts with AMFR. Interacts with LMBR1L. Interacts with SOX30; prevents interaction of CTNNB1 with TCF7L2/TCF4 and leads to inhibition of Wnt signaling. Interacts with SOX9; inhibiting CTNNB1 activity by competing with the binding sites of TCF/LEF within CTNNB1, thereby inhibiting the Wnt signaling. Interacts with SPN/CD43 cytoplasmic tail. Interacts (when phosphorylated at Tyr-333) with isoform M2 of PKM (PKM2); promoting transcription activation. Interacts with PKP2 (via HEAD domain). Interacts with CDH1. Interacts (when unphosphorylated) with FLYWCH1, perhaps preventing interaction of CTNNB1 with TCF4, and thereby regulating transcription activation; phosphorylation of CTNNB1 may inhibit the interaction. Interacts (via the central armadillo domains) with probable transcriptional regulator ADNP (via N-terminal region); interaction is direct and stabilizes CTNNB1 by modulating its phosphorylation by glycogen synthase kinase-3 beta GSK3B. Interacts with NR5A2. Interacts with DSG2; the interaction promotes localization of CTNNB1 at cell junctions thus reducing its nuclear localization and subsequent transcription of CTNNB1/TCF-target genes. In terms of assembly, (Microbial infection) Interacts with herpes virus 8 protein vPK; this interaction inhibits the Wnt signaling pathway. In terms of processing, phosphorylation at Ser-552 by AMPK promotes stabilization of the protein, enhancing TCF/LEF-mediated transcription. Phosphorylation by GSK3B requires prior phosphorylation of Ser-45 by another kinase. Phosphorylation proceeds then from Thr-41 to Ser-37 and Ser-33. Phosphorylated by NEK2. EGF stimulates tyrosine phosphorylation. Phosphorylated on Ser-33 and Ser-37 by HIPK2 and GSK3B, this phosphorylation triggers proteasomal degradation. Phosphorylation on Ser-191 and Ser-246 by CDK5. Phosphorylation by CDK2 regulates insulin internalization. Phosphorylation by PTK6 at Tyr-64, Tyr-142, Tyr-331 and/or Tyr-333 with the predominant site at Tyr-64 is not essential for inhibition of transcriptional activity. Phosphorylation by SRC at Tyr-333 promotes interaction with isoform M2 of PKM (PKM2); promoting transcription activation. Post-translationally, ubiquitinated by the SCF(BTRC) E3 ligase complex when phosphorylated by GSK3B, leading to its degradation. Ubiquitinated by a E3 ubiquitin ligase complex containing UBE2D1, SIAH1, CACYBP/SIP, SKP1, APC and TBL1X, leading to its subsequent proteasomal degradation. Ubiquitinated and degraded following interaction with SOX9. Ubiquitinated via 'Lys-11'- and 'Lys-29'-linked ubiquitin chains by UBR5, leading to its stabilization. S-nitrosylation at Cys-619 within adherens junctions promotes VEGF-induced, NO-dependent endothelial cell permeability by disrupting interaction with E-cadherin, thus mediating disassembly adherens junctions. In terms of processing, O-glycosylation at Ser-23 decreases nuclear localization and transcriptional activity, and increases localization to the plasma membrane and interaction with E-cadherin CDH1. Post-translationally, deacetylated at Lys-49 by SIRT1. Phosphorylated at Thr-556 by herpes virus 1/HHV-1 leading to CTNNB1 inhibition. As to expression, expressed in several hair follicle cell types: basal and peripheral matrix cells, and cells of the outer and inner root sheaths. Expressed in colon. Present in cortical neurons (at protein level). Expressed in breast cancer tissues (at protein level).

The protein localises to the cytoplasm. The protein resides in the nucleus. It is found in the cytoskeleton. Its subcellular location is the cell junction. It localises to the adherens junction. The protein localises to the cell membrane. The protein resides in the microtubule organizing center. It is found in the centrosome. Its subcellular location is the spindle pole. It localises to the synapse. The protein localises to the cilium basal body. Key downstream component of the canonical Wnt signaling pathway. In the absence of Wnt, forms a complex with AXIN1, AXIN2, APC, CSNK1A1 and GSK3B that promotes phosphorylation on N-terminal Ser and Thr residues and ubiquitination of CTNNB1 via BTRC and its subsequent degradation by the proteasome. In the presence of Wnt ligand, CTNNB1 is not ubiquitinated and accumulates in the nucleus, where it acts as a coactivator for transcription factors of the TCF/LEF family, leading to activate Wnt responsive genes. Also acts as a coactivator for other transcription factors, such as NR5A2. Promotes epithelial to mesenchymal transition/mesenchymal to epithelial transition (EMT/MET) via driving transcription of CTNNB1/TCF-target genes. Involved in the regulation of cell adhesion, as component of an E-cadherin:catenin adhesion complex. Acts as a negative regulator of centrosome cohesion. Involved in the CDK2/PTPN6/CTNNB1/CEACAM1 pathway of insulin internalization. Blocks anoikis of malignant kidney and intestinal epithelial cells and promotes their anchorage-independent growth by down-regulating DAPK2. Disrupts PML function and PML-NB formation by inhibiting RANBP2-mediated sumoylation of PML. Promotes neurogenesis by maintaining sympathetic neuroblasts within the cell cycle. Involved in chondrocyte differentiation via interaction with SOX9: SOX9-binding competes with the binding sites of TCF/LEF within CTNNB1, thereby inhibiting the Wnt signaling. Acts as a positive regulator of odontoblast differentiation during mesenchymal tooth germ formation, via promoting the transcription of differentiation factors such as LEF1, BMP2 and BMP4. Activity is repressed in a MSX1-mediated manner at the bell stage of mesenchymal tooth germ formation which prevents premature differentiation of odontoblasts. The protein is Catenin beta-1 of Homo sapiens (Human).